The primary structure comprises 1528 residues: DNA topoisomerase 2-alpha (1528 aa).

The residue at position 1 (Met-1) is an N-acetylmethionine. Position 4 is a phosphoserine (Ser-4). Lys-17 is covalently cross-linked (Glycyl lysine isopeptide (Lys-Gly) (interchain with G-Cter in SUMO2)). ATP is bound by residues Asn-90, Asn-119, and 147 to 149 (SSN). Residues Lys-155 and Lys-156 each participate in a glycyl lysine isopeptide (Lys-Gly) (interchain with G-Cter in SUMO2) cross-link. 160–167 (GRNGYGAK) serves as a coordination point for ATP. Phosphothreonine is present on Thr-281. Positions 341-343 (KKK) are interaction with DNA. Lys-351 is covalently cross-linked (Glycyl lysine isopeptide (Lys-Gly) (interchain with G-Cter in SUMO2)). 375-377 (QTK) is an ATP binding site. Residues Lys-385, Lys-396, Lys-415, Lys-417, Lys-424, and Lys-439 each participate in a glycyl lysine isopeptide (Lys-Gly) (interchain with G-Cter in SUMO2) cross-link. A Toprim domain is found at 454-571 (CTLILTEGDS…SLLRHRFLEE (118 aa)). Position 460 (Glu-460) interacts with Mg(2+). Residues Lys-465, Lys-479, and Lys-528 each participate in a glycyl lysine isopeptide (Lys-Gly) (interchain with G-Cter in SUMO2) cross-link. The Mg(2+) site is built by Asp-540 and Asp-542. Glycyl lysine isopeptide (Lys-Gly) (interchain with G-Cter in SUMO2) cross-links involve residues Lys-583, Lys-598, Lys-613, Lys-621, Lys-624, Lys-631, Lys-638, Lys-654, Lys-661, and Lys-675. In terms of domain architecture, Topo IIA-type catalytic spans 714 to 1168 (IPSMVDGLKP…SPSDLWKEDL (455 aa)). Catalysis depends on Tyr-804, which acts as the O-(5'-phospho-DNA)-tyrosine intermediate. The interval 989 to 998 (KLQSSLTCNS) is interaction with DNA. Lys-1074 participates in a covalent cross-link: Glycyl lysine isopeptide (Lys-Gly) (interchain with G-Cter in SUMO2). Disordered regions lie at residues 1090–1118 (KEAQ…AAEA) and 1183–1211 (KQDE…VLPS). The segment covering 1098 to 1107 (DEEENEESDT) has biased composition (acidic residues). Ser-1105 is modified (phosphoserine; by CK1). Positions 1108–1118 (ETSTSDSAAEA) are enriched in low complexity. Residues Lys-1193 and Lys-1201 each participate in a glycyl lysine isopeptide (Lys-Gly) (interchain with G-Cter in SUMO2) cross-link. Ser-1211 is subject to Phosphoserine. A Glycyl lysine isopeptide (Lys-Gly) (interchain with G-Cter in SUMO2) cross-link involves residue Lys-1226. Residues 1229-1528 (AEKKIRKKIK…EESDDDDDLF (300 aa)) are disordered. A Glycyl lysine isopeptide (Lys-Gly) (interchain with G-Cter in SUMO1); alternate cross-link involves residue Lys-1238. Residue Lys-1238 forms a Glycyl lysine isopeptide (Lys-Gly) (interchain with G-Cter in SUMO2); alternate linkage. Residue Thr-1245 is modified to Phosphothreonine. Over residues 1258–1270 (QRIEKKQKKEPGA) the composition is skewed to basic and acidic residues. Residues Lys-1272, Lys-1279, and Lys-1282 each participate in a glycyl lysine isopeptide (Lys-Gly) (interchain with G-Cter in SUMO2) cross-link. 4 positions are modified to phosphoserine: Ser-1291, Ser-1293, Ser-1295, and Ser-1298. Over residues 1296 to 1306 (DVSSNESNVDV) the composition is skewed to low complexity. Thr-1323 carries the phosphothreonine modification. Residues 1326–1345 (LDSDEDFSGLDEKDEDEDFL) are compositionally biased toward acidic residues. Ser-1328 and Ser-1333 each carry phosphoserine. Position 1350 is a phosphothreonine (Thr-1350). Residues Lys-1359 and Lys-1363 each participate in a glycyl lysine isopeptide (Lys-Gly) (interchain with G-Cter in SUMO2) cross-link. Phosphoserine is present on residues Ser-1370 and Ser-1373. Residue Lys-1382 forms a Glycyl lysine isopeptide (Lys-Gly) (interchain with G-Cter in SUMO2) linkage. Residues Ser-1384 and Ser-1388 each carry the phosphoserine modification. Lys-1418 participates in a covalent cross-link: Glycyl lysine isopeptide (Lys-Gly) (interchain with G-Cter in SUMO2); alternate. Residue Lys-1418 is modified to N6-acetyllysine; alternate. The tract at residues 1429 to 1435 (KKRAAPK) is interaction with PLSCR1. Residue Lys-1438 forms a Glycyl lysine isopeptide (Lys-Gly) (interchain with G-Cter in SUMO2); alternate linkage. The residue at position 1438 (Lys-1438) is an N6-acetyllysine; alternate. Glycyl lysine isopeptide (Lys-Gly) (interchain with G-Cter in SUMO2) cross-links involve residues Lys-1450 and Lys-1455. A phosphoserine mark is found at Ser-1465, Ser-1467, Ser-1470, and Ser-1472. Glycyl lysine isopeptide (Lys-Gly) (interchain with G-Cter in SUMO2) cross-links involve residues Lys-1480 and Lys-1488. Residues 1506-1519 (AKSDRARKPIKYLE) show a composition bias toward basic and acidic residues. Phosphoserine is present on Ser-1521.

The protein belongs to the type II topoisomerase family. In terms of assembly, homodimer. Interacts with COPS5. Interacts with RECQL5; this stimulates DNA decatenation. Interacts with SETMAR; stimulates the topoisomerase activity. Interacts with DHX9; this interaction occurs in a E2 enzyme UBE2I- and RNA-dependent manner, negatively regulates DHX9-mediated double-stranded DNA and RNA duplex helicase activity and stimulates TOP2A-mediated supercoiled DNA relaxation activity. Interacts with HNRNPU (via C-terminus); this interaction protects the topoisomerase TOP2A from degradation and positively regulates the relaxation of supercoiled DNA in a RNA-dependent manner. Interacts with MCM3AP. Interacts with ERCC6. Interacts with PLSCR1. Interacts with GCNA; this interaction allows the resolution of topoisomerase II (TOP2A) DNA-protein cross-links. Interacts with POL1RA/RPA1 (via dock II) and UBTF in the context of Pol I complex; may assist Pol I transcription initiation by releasing supercoils occurring during DNA unwinding. Interacts with TPRN; TPRN interacts with a number of DNA damage response proteins, is recruited to sites of DNA damage and may play a role in DNA damage repair. Mg(2+) is required as a cofactor. It depends on Mn(2+) as a cofactor. The cofactor is Ca(2+). Phosphorylation has no effect on catalytic activity. However, phosphorylation at Ser-1105 by CSNK1D/CK1 promotes DNA cleavable complex formation.

The protein resides in the cytoplasm. It is found in the nucleus. The protein localises to the nucleoplasm. Its subcellular location is the nucleolus. It carries out the reaction ATP-dependent breakage, passage and rejoining of double-stranded DNA.. Its function is as follows. Key decatenating enzyme that alters DNA topology by binding to two double-stranded DNA molecules, generating a double-stranded break in one of the strands, passing the intact strand through the broken strand, and religating the broken strand. May play a role in regulating the period length of BMAL1 transcriptional oscillation. The polypeptide is DNA topoisomerase 2-alpha (Top2a) (Mus musculus (Mouse)).